The chain runs to 650 residues: Acetyl-coenzyme A synthetase (650 aa).

Residues 191-194 (RGGR), Thr-311, and Asn-335 each bind CoA. ATP is bound by residues 387 to 389 (GEP), 411 to 416 (DTWWQT), Asp-500, and Arg-515. Ser-523 contributes to the CoA binding site. Arg-526 lines the ATP pocket. Residues Val-537, His-539, and Val-542 each coordinate Mg(2+). Arg-584 contacts CoA. Lys-609 carries the N6-acetyllysine modification.

This sequence belongs to the ATP-dependent AMP-binding enzyme family. Mg(2+) serves as cofactor. In terms of processing, acetylated. Deacetylation by the SIR2-homolog deacetylase activates the enzyme.

It catalyses the reaction acetate + ATP + CoA = acetyl-CoA + AMP + diphosphate. Its function is as follows. Catalyzes the conversion of acetate into acetyl-CoA (AcCoA), an essential intermediate at the junction of anabolic and catabolic pathways. AcsA undergoes a two-step reaction. In the first half reaction, AcsA combines acetate with ATP to form acetyl-adenylate (AcAMP) intermediate. In the second half reaction, it can then transfer the acetyl group from AcAMP to the sulfhydryl group of CoA, forming the product AcCoA. The chain is Acetyl-coenzyme A synthetase from Shewanella sp. (strain MR-7).